The following is a 228-amino-acid chain: Small ribosomal subunit protein uS3 (228 aa).

In terms of domain architecture, KH type-2 spans 39-107 (VREYLQDKLK…PVHINIEEIR (69 aa)).

The protein belongs to the universal ribosomal protein uS3 family. As to quaternary structure, part of the 30S ribosomal subunit. Forms a tight complex with proteins S10 and S14.

Binds the lower part of the 30S subunit head. Binds mRNA in the 70S ribosome, positioning it for translation. This chain is Small ribosomal subunit protein uS3, found in Pseudomonas syringae pv. syringae (strain B728a).